We begin with the raw amino-acid sequence, 378 residues long: Chaperone protein DnaJ (378 aa).

A J domain is found at 5 to 70; it reads DYYQILGIPK…EKRTAYDQYG (66 aa). The segment at 133-211 adopts a CR-type zinc-finger fold; sequence GTTKEIRIPT…CRGQGRIKTN (79 aa). Residues Cys146, Cys149, Cys163, Cys166, Cys185, Cys188, Cys199, and Cys202 each coordinate Zn(2+). 4 CXXCXGXG motif repeats span residues 146–153, 163–170, 185–192, and 199–206; these read CKTCYGMG, CSTCHGKG, CPTCNGIG, and CRMCRGQG.

Belongs to the DnaJ family. Homodimer. Zn(2+) serves as cofactor.

The protein resides in the cytoplasm. Participates actively in the response to hyperosmotic and heat shock by preventing the aggregation of stress-denatured proteins and by disaggregating proteins, also in an autonomous, DnaK-independent fashion. Unfolded proteins bind initially to DnaJ; upon interaction with the DnaJ-bound protein, DnaK hydrolyzes its bound ATP, resulting in the formation of a stable complex. GrpE releases ADP from DnaK; ATP binding to DnaK triggers the release of the substrate protein, thus completing the reaction cycle. Several rounds of ATP-dependent interactions between DnaJ, DnaK and GrpE are required for fully efficient folding. Also involved, together with DnaK and GrpE, in the DNA replication of plasmids through activation of initiation proteins. The chain is Chaperone protein DnaJ from Buchnera aphidicola subsp. Schizaphis graminum (strain Sg).